Here is a 416-residue protein sequence, read N- to C-terminus: Serine hydroxymethyltransferase (416 aa).

(6S)-5,6,7,8-tetrahydrofolate is bound by residues Leu-121 and 125–127 (GHL). Position 229 is an N6-(pyridoxal phosphate)lysine (Lys-229).

This sequence belongs to the SHMT family. Homodimer. Pyridoxal 5'-phosphate serves as cofactor.

The protein resides in the cytoplasm. The catalysed reaction is (6R)-5,10-methylene-5,6,7,8-tetrahydrofolate + glycine + H2O = (6S)-5,6,7,8-tetrahydrofolate + L-serine. It participates in one-carbon metabolism; tetrahydrofolate interconversion. It functions in the pathway amino-acid biosynthesis; glycine biosynthesis; glycine from L-serine: step 1/1. In terms of biological role, catalyzes the reversible interconversion of serine and glycine with tetrahydrofolate (THF) serving as the one-carbon carrier. This reaction serves as the major source of one-carbon groups required for the biosynthesis of purines, thymidylate, methionine, and other important biomolecules. Also exhibits THF-independent aldolase activity toward beta-hydroxyamino acids, producing glycine and aldehydes, via a retro-aldol mechanism. This is Serine hydroxymethyltransferase from Neisseria meningitidis serogroup A / serotype 4A (strain DSM 15465 / Z2491).